Reading from the N-terminus, the 619-residue chain is Dihydroxy-acid dehydratase (619 aa).

Mg(2+) is bound at residue D81. A [2Fe-2S] cluster-binding site is contributed by C122. The Mg(2+) site is built by D123 and K124. The residue at position 124 (K124) is an N6-carboxylysine. Residue C195 coordinates [2Fe-2S] cluster. A Mg(2+)-binding site is contributed by E494. Residue S520 is the Proton acceptor of the active site.

This sequence belongs to the IlvD/Edd family. Homodimer. The cofactor is [2Fe-2S] cluster. It depends on Mg(2+) as a cofactor.

It carries out the reaction (2R)-2,3-dihydroxy-3-methylbutanoate = 3-methyl-2-oxobutanoate + H2O. The enzyme catalyses (2R,3R)-2,3-dihydroxy-3-methylpentanoate = (S)-3-methyl-2-oxopentanoate + H2O. The protein operates within amino-acid biosynthesis; L-isoleucine biosynthesis; L-isoleucine from 2-oxobutanoate: step 3/4. It functions in the pathway amino-acid biosynthesis; L-valine biosynthesis; L-valine from pyruvate: step 3/4. Its function is as follows. Functions in the biosynthesis of branched-chain amino acids. Catalyzes the dehydration of (2R,3R)-2,3-dihydroxy-3-methylpentanoate (2,3-dihydroxy-3-methylvalerate) into 2-oxo-3-methylpentanoate (2-oxo-3-methylvalerate) and of (2R)-2,3-dihydroxy-3-methylbutanoate (2,3-dihydroxyisovalerate) into 2-oxo-3-methylbutanoate (2-oxoisovalerate), the penultimate precursor to L-isoleucine and L-valine, respectively. The chain is Dihydroxy-acid dehydratase from Shewanella frigidimarina (strain NCIMB 400).